The sequence spans 61 residues: MWIYRSQKSKNPDNLLQLWRVRKDYRGPLKPYSQQFSYAGSIVICPEKFKTSFCARSFCAL.

Its function is as follows. Controls the copy number in gene replication. The chain is Protein CopA/IncA (copA) from Escherichia coli.